Reading from the N-terminus, the 754-residue chain is Glutathione biosynthesis bifunctional protein GshAB (754 aa).

A glutamate--cysteine ligase region spans residues 1–332 (MTLNQLLQKL…QGHALNEKIA (332 aa)). Residues 488–746 (KKILADAGFP…ITTKILDKLF (259 aa)) enclose the ATP-grasp domain. 515-573 (PLIKDKQIVVKPKSTNFGLGISIFQEPASLDNYQKALEIAFAEDTSVLVEEFIPGTEYR) lines the ATP pocket. Mg(2+)-binding residues include Asp-695, Glu-716, and Asn-718. Mn(2+) is bound by residues Asp-695, Glu-716, and Asn-718.

This sequence in the N-terminal section; belongs to the glutamate--cysteine ligase type 1 family. Type 2 subfamily. In terms of assembly, monomer. Mg(2+) is required as a cofactor. Requires Mn(2+) as cofactor.

The catalysed reaction is L-cysteine + L-glutamate + ATP = gamma-L-glutamyl-L-cysteine + ADP + phosphate + H(+). It carries out the reaction gamma-L-glutamyl-L-cysteine + glycine + ATP = glutathione + ADP + phosphate + H(+). It participates in sulfur metabolism; glutathione biosynthesis; glutathione from L-cysteine and L-glutamate: step 1/2. The protein operates within sulfur metabolism; glutathione biosynthesis; glutathione from L-cysteine and L-glutamate: step 2/2. In terms of biological role, synthesizes glutathione from L-glutamate and L-cysteine via gamma-L-glutamyl-L-cysteine. The protein is Glutathione biosynthesis bifunctional protein GshAB of Streptococcus thermophilus (strain CNRZ 1066).